A 1216-amino-acid chain; its full sequence is 1-phosphatidylinositol 4,5-bisphosphate phosphodiesterase beta-1 (1216 aa).

Cys-17 carries the S-palmitoyl cysteine lipid modification. Ser-236 bears the Phosphoserine mark. Residues 316–467 (EDMSQPLSHY…LMYKILVKNK (152 aa)) enclose the PI-PLC X-box domain. Residues His-331 and His-378 contribute to the active site. Ser-417 carries the post-translational modification Phosphoserine. The segment at 469-534 (KSHKSSEGSG…MDEGTAGSEA (66 aa)) is disordered. The span at 472–483 (KSSEGSGKKKLS) shows a compositional bias: basic and acidic residues. Over residues 491-501 (SDSSSVFEPSS) the composition is skewed to low complexity. Residues 507-518 (ADTESDDDDDDD) show a composition bias toward acidic residues. Phosphothreonine is present on Thr-509. Phosphoserine occurs at positions 511 and 582. Positions 540-656 (MSNLVNYIQP…GYRLKPEFMR (117 aa)) constitute a PI-PLC Y-box domain. The 131-residue stretch at 656–786 (RRPDKHFDPF…RNERNQPLTL (131 aa)) folds into the C2 domain. Disordered stretches follow at residues 834–891 (DEEE…VKAP), 967–989 (EKSAKKDSKKKSEPSSPDHGSSA), 1072–1095 (MDKKRQEKITEAKSKDKSQMEEEK), and 1173–1216 (ISED…DTPL). Polar residues predominate over residues 846 to 868 (ETSSEAPSETRTTPAENGVNHTA). At Ser-887 the chain carries Phosphoserine; by PKC. A compositionally biased stretch (basic and acidic residues) spans 967–979 (EKSAKKDSKKKSE). A phosphoserine mark is found at Ser-978 and Ser-987. Over residues 1075 to 1095 (KRQEKITEAKSKDKSQMEEEK) the composition is skewed to basic and acidic residues. Ser-1197, Ser-1199, and Ser-1200 each carry phosphoserine. The span at 1205–1216 (RENPGREFDTPL) shows a compositional bias: basic and acidic residues.

As to quaternary structure, interacts with DGKQ. Requires Ca(2+) as cofactor. Post-translationally, palmitoylated. Palmitoylation at Cys-17 by ZDHHC21 regulates the signaling activity of PLCB1 and the function of the endothelial barrier. Palmitoylation by ZDHHC21 is stimulated by inflammation.

It is found in the nucleus membrane. The protein resides in the cytoplasm. It carries out the reaction a 1,2-diacyl-sn-glycero-3-phospho-(1D-myo-inositol-4,5-bisphosphate) + H2O = 1D-myo-inositol 1,4,5-trisphosphate + a 1,2-diacyl-sn-glycerol + H(+). The catalysed reaction is a 1,2-diacyl-sn-glycero-3-phospho-(1D-myo-inositol) + H2O = 1D-myo-inositol 1-phosphate + a 1,2-diacyl-sn-glycerol + H(+). Functionally, catalyzes the hydrolysis of 1-phosphatidylinositol 4,5-bisphosphate into diacylglycerol (DAG) and inositol 1,4,5-trisphosphate (IP3) and mediates intracellular signaling downstream of G protein-coupled receptors. Regulates the function of the endothelial barrier. The sequence is that of 1-phosphatidylinositol 4,5-bisphosphate phosphodiesterase beta-1 from Mus musculus (Mouse).